We begin with the raw amino-acid sequence, 122 residues long: Ribosome-binding factor A (122 aa).

Belongs to the RbfA family. Monomer. Binds 30S ribosomal subunits, but not 50S ribosomal subunits or 70S ribosomes.

It is found in the cytoplasm. Functionally, one of several proteins that assist in the late maturation steps of the functional core of the 30S ribosomal subunit. Associates with free 30S ribosomal subunits (but not with 30S subunits that are part of 70S ribosomes or polysomes). Required for efficient processing of 16S rRNA. May interact with the 5'-terminal helix region of 16S rRNA. This Polaromonas sp. (strain JS666 / ATCC BAA-500) protein is Ribosome-binding factor A.